Consider the following 481-residue polypeptide: Cysteine--tRNA ligase (481 aa).

Residue Cys29 participates in Zn(2+) binding. A 'HIGH' region motif is present at residues 31 to 41 (PTVYDYSHLGH). Cys210, His235, and Glu239 together coordinate Zn(2+). Residues 272 to 276 (KMSKS) carry the 'KMSKS' region motif. ATP is bound at residue Lys275.

It belongs to the class-I aminoacyl-tRNA synthetase family. In terms of assembly, monomer. Zn(2+) serves as cofactor.

It is found in the cytoplasm. The catalysed reaction is tRNA(Cys) + L-cysteine + ATP = L-cysteinyl-tRNA(Cys) + AMP + diphosphate. The sequence is that of Cysteine--tRNA ligase from Anaeromyxobacter sp. (strain K).